The primary structure comprises 163 residues: Cyanate hydratase (163 aa).

Catalysis depends on residues Arg103, Glu106, and Ser129.

Belongs to the cyanase family.

It carries out the reaction cyanate + hydrogencarbonate + 3 H(+) = NH4(+) + 2 CO2. Functionally, catalyzes the reaction of cyanate with bicarbonate to produce ammonia and carbon dioxide. In Ajellomyces capsulatus (strain H143) (Darling's disease fungus), this protein is Cyanate hydratase.